The following is a 103-amino-acid chain: Cell division protein FtsB (103 aa).

The Cytoplasmic segment spans residues 1 to 3 (MGK). Residues 4-21 (LTLLLLALLVWLQYSLWF) traverse the membrane as a helical segment. Residues 22–103 (GKNGIHDYSR…RAGGPAQNNR (82 aa)) lie on the Periplasmic side of the membrane. Positions 38-62 (VQQATNAKLKARNDQLFAEIDDLNG) form a coiled coil.

It belongs to the FtsB family. Part of a complex composed of FtsB, FtsL and FtsQ.

The protein resides in the cell inner membrane. Its function is as follows. Essential cell division protein. May link together the upstream cell division proteins, which are predominantly cytoplasmic, with the downstream cell division proteins, which are predominantly periplasmic. In Cronobacter sakazakii (strain ATCC BAA-894) (Enterobacter sakazakii), this protein is Cell division protein FtsB.